The chain runs to 414 residues: COUP transcription factor 2 (414 aa).

The interval 1–72 (MAMVVSTWRD…PGGPGSDKQQ (72 aa)) is disordered. The segment covering 27 to 37 (PPVPGPPPGAP) has biased composition (pro residues). Positions 38–57 (HTPQTPGQGGPASTPAQTAA) are enriched in low complexity. Threonine 51 carries the post-translational modification Phosphothreonine. The segment covering 58 to 67 (GGQGGPGGPG) has biased composition (gly residues). A DNA-binding region (nuclear receptor) is located at residues 76–151 (HIECVVCGDK…VGMRREAVQR (76 aa)). NR C4-type zinc fingers lie at residues 79–99 (CVVC…CEGC) and 115–139 (CRAN…LKKC). The segment at 117-414 (ANRNCPIDQH…SFNWPYMAIQ (298 aa)) is interaction with ZFPM2. The NR LBD domain maps to 177-403 (YLSGYISLLL…TLIRDMLLSG (227 aa)). The tract at residues 337-414 (LQEKSQCALE…SFNWPYMAIQ (78 aa)) is important for dimerization.

Belongs to the nuclear hormone receptor family. NR2 subfamily. As to quaternary structure, interacts with SQSTM1. Binds DNA as a dimer; homodimer or heterodimer with NR2F6. Interacts with NCOA1, NCOA2, NCOA3 and PPARGC1A. Interacts with ZFPM2.

It localises to the nucleus. Its function is as follows. Ligand-activated transcription factor. Activated by high concentrations of 9-cis-retinoic acid and all-trans-retinoic acid, but not by dexamethasone, cortisol or progesterone (in vitro). Regulation of the apolipoprotein A-I gene transcription. Binds to DNA site A. May be required to establish ovary identity during early gonad development. The chain is COUP transcription factor 2 (NR2F2) from Bos taurus (Bovine).